Here is a 439-residue protein sequence, read N- to C-terminus: Glucan 1,3-beta-glucosidase (439 aa).

The N-terminal stretch at 1–18 is a signal peptide; the sequence is MLLSLLFLLSTFAFGALT. E227 (proton donor) is an active-site residue. Cystine bridges form between C311–C437 and C336–C366. E328 functions as the Nucleophile in the catalytic mechanism.

This sequence belongs to the glycosyl hydrolase 5 (cellulase A) family.

It localises to the secreted. The catalysed reaction is Successive hydrolysis of beta-D-glucose units from the non-reducing ends of (1-&gt;3)-beta-D-glucans, releasing alpha-glucose.. In terms of biological role, beta-glucanases participate in the metabolism of beta-glucan, the main structural component of the cell wall. It could also function biosynthetically as a transglycosylase. The sequence is that of Glucan 1,3-beta-glucosidase (EXG1) from Lachancea kluyveri (strain ATCC 58438 / CBS 3082 / BCRC 21498 / NBRC 1685 / JCM 7257 / NCYC 543 / NRRL Y-12651) (Yeast).